A 249-amino-acid chain; its full sequence is Probable transcriptional regulatory protein CYB_1350 (249 aa).

It belongs to the TACO1 family.

The protein resides in the cytoplasm. This chain is Probable transcriptional regulatory protein CYB_1350, found in Synechococcus sp. (strain JA-2-3B'a(2-13)) (Cyanobacteria bacterium Yellowstone B-Prime).